The sequence spans 165 residues: MIINEIEGSLREFDITNRVVDYLEIEWFESTKRIQRKKSKNGQEVAIKFLKEGQRLKHEDVIYADDQKIIVVDIIPCDAIVVKPKSLLEMGNVCYEIGNKHLPMFIQNDEVLLPFEEPIFKWLSASGYHTEKVFTRLTNIVNSTVQPHGHSESSSLFFKIMNIAK.

It belongs to the UreE family.

Its subcellular location is the cytoplasm. Involved in urease metallocenter assembly. Binds nickel. Probably functions as a nickel donor during metallocenter assembly. The polypeptide is Urease accessory protein UreE (Flavobacterium johnsoniae (strain ATCC 17061 / DSM 2064 / JCM 8514 / BCRC 14874 / CCUG 350202 / NBRC 14942 / NCIMB 11054 / UW101) (Cytophaga johnsonae)).